The chain runs to 94 residues: Neutrophil defensin 1 (94 aa).

The N-terminal stretch at 1–19 is a signal peptide; sequence MRTLAILAAILLVALQAQA. Residues 20–64 constitute a propeptide that is removed on maturation; that stretch reads EPLQARADEVAAAPEQIPADNPEVVVSLAWDESLAPKHPGSRKNV. 3 disulfide bridges follow: Cys66/Cys94, Cys68/Cys83, and Cys73/Cys93. Arg78 is modified (ADP-ribosylarginine; by ART1). Position 85 is a phosphotyrosine (Tyr85). Arg88 carries the ADP-ribosylarginine; by ART1 modification.

This sequence belongs to the alpha-defensin family. As to quaternary structure, tetramer. Dimer. Interacts with RETN. ADP-ribosylation drastically reduces cytotoxic and antibacterial activities, and enhances IL8 production.

Its subcellular location is the secreted. Its function is as follows. Effector molecule of the innate immune system that acts via antibiotic-like properties against a broad array of infectious agents including bacteria, fungi, and viruses or by promoting the activation and maturation of some APCs. Interacts with the essential precursor of cell wall synthesis lipid II to inhibit bacterial cell wall synthesis. Inhibits adenovirus infection via inhibition of viral disassembly at the vertex region, thereby restricting the release of internal capsid protein pVI, which is required for endosomal membrane penetration during cell entry. In addition, interaction with adenovirus capsid leads to the redirection of viral particles to TLR4 thereby promoting a NLRP3-mediated inflammasome response and interleukin 1-beta (IL-1beta) release. Induces the production of proinflammatory cytokines including type I interferon (IFN) in plasmacytoid dendritic cells (pDCs) by triggering the degradation of NFKBIA and nuclear translocation of IRF1, both of which are required for activation of pDCs. The chain is Neutrophil defensin 1 (DEFA1) from Pan troglodytes (Chimpanzee).